The following is a 293-amino-acid chain: Kallikrein-5 (293 aa).

The signal sequence occupies residues 1 to 22 (MATARPPWMWVLCALITALLLG). Polar residues predominate over residues 37–49 (HPSNTVPSGSNQD). A disordered region spans residues 37 to 68 (HPSNTVPSGSNQDLGAGAGEDARSDDSSSRII). A Peptidase S1 domain is found at 67–290 (IINGSDCDMH…FTKWIQETIQ (224 aa)). Residue Asn-69 is glycosylated (N-linked (GlcNAc...) asparagine). 6 cysteine pairs are disulfide-bonded: Cys-73-Cys-206, Cys-93-Cys-109, Cys-178-Cys-279, Cys-185-Cys-251, Cys-217-Cys-231, and Cys-241-Cys-266. Residues His-108 and Asp-153 each act as charge relay system in the active site. 2 N-linked (GlcNAc...) asparagine glycosylation sites follow: Asn-173 and Asn-208. Catalysis depends on Ser-245, which acts as the Charge relay system. An N-linked (GlcNAc...) asparagine glycan is attached at Asn-252.

The protein belongs to the peptidase S1 family. Kallikrein subfamily. In terms of assembly, interacts with SPINK9. In terms of tissue distribution, expressed in skin, breast, brain and testis. Expressed at the stratum granulosum of palmar skin.

It localises to the secreted. Its activity is regulated as follows. Inhibited by Zn2+. May be involved in desquamation. This chain is Kallikrein-5, found in Homo sapiens (Human).